The chain runs to 111 residues: RNA polymerase-binding protein RbpA (111 aa).

Belongs to the RNA polymerase-binding protein RbpA family. In terms of assembly, forms a complex with the RNAP catalytic core and with free principal sigma factors.

Functionally, binds to RNA polymerase (RNAP), stimulating transcription from principal, but not alternative sigma factor promoters. This is RNA polymerase-binding protein RbpA from Mycobacterium tuberculosis (strain CDC 1551 / Oshkosh).